The sequence spans 218 residues: Peptide deformylase (218 aa).

Cysteine 130 and histidine 172 together coordinate Fe cation. Glutamate 173 is an active-site residue. Histidine 176 is a Fe cation binding site.

The protein belongs to the polypeptide deformylase family. It depends on Fe(2+) as a cofactor.

The enzyme catalyses N-terminal N-formyl-L-methionyl-[peptide] + H2O = N-terminal L-methionyl-[peptide] + formate. Its function is as follows. Removes the formyl group from the N-terminal Met of newly synthesized proteins. Requires at least a dipeptide for an efficient rate of reaction. N-terminal L-methionine is a prerequisite for activity but the enzyme has broad specificity at other positions. The polypeptide is Peptide deformylase (Bifidobacterium adolescentis (strain ATCC 15703 / DSM 20083 / NCTC 11814 / E194a)).